Consider the following 539-residue polypeptide: Glucans biosynthesis protein D (539 aa).

The segment at residues 1–29 (MNRRNLLKASMALAAYGSVSASGLYAARA) is a signal peptide (tat-type signal).

The protein belongs to the OpgD/OpgG family. Post-translationally, predicted to be exported by the Tat system. The position of the signal peptide cleavage has not been experimentally proven.

It localises to the periplasm. It functions in the pathway glycan metabolism; osmoregulated periplasmic glucan (OPG) biosynthesis. In terms of biological role, probably involved in the control of the structural glucose backbone of osmoregulated periplasmic glucans (OPGs). The sequence is that of Glucans biosynthesis protein D from Pseudomonas savastanoi pv. phaseolicola (strain 1448A / Race 6) (Pseudomonas syringae pv. phaseolicola (strain 1448A / Race 6)).